We begin with the raw amino-acid sequence, 212 residues long: Pyrrolidone-carboxylate peptidase (212 aa).

Active-site residues include Glu-78, Cys-141, and His-165.

The protein belongs to the peptidase C15 family. Homotetramer.

It localises to the cytoplasm. The enzyme catalyses Release of an N-terminal pyroglutamyl group from a polypeptide, the second amino acid generally not being Pro.. In terms of biological role, removes 5-oxoproline from various penultimate amino acid residues except L-proline. This Staphylococcus aureus protein is Pyrrolidone-carboxylate peptidase (pcp).